The primary structure comprises 81 residues: Large ribosomal subunit protein uL24 (81 aa).

This sequence belongs to the universal ribosomal protein uL24 family. As to quaternary structure, part of the 50S ribosomal subunit.

Functionally, one of two assembly initiator proteins, it binds directly to the 5'-end of the 23S rRNA, where it nucleates assembly of the 50S subunit. In terms of biological role, one of the proteins that surrounds the polypeptide exit tunnel on the outside of the subunit. The polypeptide is Large ribosomal subunit protein uL24 (Chloroherpeton thalassium (strain ATCC 35110 / GB-78)).